We begin with the raw amino-acid sequence, 256 residues long: Osteocalcin 2 (256 aa).

The first 18 residues, 1-18, serve as a signal peptide directing secretion; sequence MKTLVLLSICALLSVCWS. Residues 19–209 constitute a propeptide that is removed on maturation; that stretch reads MGAVEPEVVV…LASVLLRRRR (191 aa). Residues 38-186 are compositionally biased toward low complexity; it reads AAPADPAAAA…SSSSSSSSES (149 aa). Residues 38–193 form a disordered region; sequence AAPADPAAAA…SESASDEAAK (156 aa). The region spanning 218–252 is the Gla domain; that stretch reads PLQLESLREVCELNIACDEMAETAGIVAAYVAYYG. 4 residues coordinate Ca(2+): Glu-222, Glu-226, Glu-229, and Asp-235. A 4-carboxyglutamate mark is found at Glu-222, Glu-226, and Glu-229. Cys-228 and Cys-234 are joined by a disulfide. Glu-236 is subject to 4-carboxyglutamate.

Belongs to the osteocalcin/matrix Gla protein family. Post-translationally, gamma-carboxyglutamate residues are formed by vitamin K dependent carboxylation by GGCX. These residues are essential for the binding of calcium.

The protein resides in the secreted. The carboxylated form is one of the main organic components of the bone matrix, which constitutes 1-2% of the total bone protein. The carboxylated form binds strongly to apatite and calcium. The protein is Osteocalcin 2 of Diplodus sargus (White seabream).